Reading from the N-terminus, the 553-residue chain is MTKNYIFITGGVVSSLGKGIAAASLGAVLEARNLKITIMKLDPYINVDPGTMSPIQHGEVFVTEDGAETDLDLGHYERFIRTKMTCLNNFTTGSIYSEVLKKERRGDYLGSTIQVIPHITNAIKDRIILCSKNSDIILVEIGGTVGDIESLPFLEAIRQLAVDIGRKNVIYIHLTLVPYIKTAGEIKTKPTQHSVKELLSIGIQPDILICRSQKTVPINERKKIALFCNVPVNAVISLKDVDSIYTIPKLLKDQKLDNYICEYFKLNVPQADLKEWEKVIYEEKNASKEIIIGIIGKYIKLPDAYKSVIEALKHAGLKNKIKVKIELINSQEIENKNFKLLQNLNGILIPGGFGDRGIIGKLLSVQYARENNIPYFGICLGMQIAIIEFAQNVIGIKEANSTEFDPQCKFPVIDLIKTKKNDIKDTRQGKKNNKSNFGGTMRLGSQPCKLIFNSLSRKLYKKDTIIERHRHRYEVNNFLLKKIEKNGLKIAGRSKKNNIVEIIEIFDHPWFIGCQFHPEFTSTPRDGHPLFIDFIKSAKKNKKNNFKIKVKNV.

The interval 1–266 (MTKNYIFITG…DNYICEYFKL (266 aa)) is amidoligase domain. Serine 14 is a binding site for CTP. A UTP-binding site is contributed by serine 14. Residues 15 to 20 (SLGKGI) and aspartate 72 each bind ATP. Mg(2+) contacts are provided by aspartate 72 and glutamate 140. CTP contacts are provided by residues 147-149 (DIE), 187-192 (KTKPTQ), and lysine 223. Residues 187–192 (KTKPTQ) and lysine 223 each bind UTP. An ATP-binding site is contributed by 239-241 (KDV). One can recognise a Glutamine amidotransferase type-1 domain in the interval 291–544 (IIGIIGKYIK…IKSAKKNKKN (254 aa)). Residue glycine 352 coordinates L-glutamine. Catalysis depends on cysteine 379, which acts as the Nucleophile; for glutamine hydrolysis. L-glutamine-binding positions include 380–383 (LGMQ), glutamate 403, and arginine 472. Residues histidine 517 and glutamate 519 contribute to the active site.

Belongs to the CTP synthase family. In terms of assembly, homotetramer.

It catalyses the reaction UTP + L-glutamine + ATP + H2O = CTP + L-glutamate + ADP + phosphate + 2 H(+). The enzyme catalyses L-glutamine + H2O = L-glutamate + NH4(+). It carries out the reaction UTP + NH4(+) + ATP = CTP + ADP + phosphate + 2 H(+). It participates in pyrimidine metabolism; CTP biosynthesis via de novo pathway; CTP from UDP: step 2/2. With respect to regulation, allosterically activated by GTP, when glutamine is the substrate; GTP has no effect on the reaction when ammonia is the substrate. The allosteric effector GTP functions by stabilizing the protein conformation that binds the tetrahedral intermediate(s) formed during glutamine hydrolysis. Inhibited by the product CTP, via allosteric rather than competitive inhibition. Functionally, catalyzes the ATP-dependent amination of UTP to CTP with either L-glutamine or ammonia as the source of nitrogen. Regulates intracellular CTP levels through interactions with the four ribonucleotide triphosphates. The protein is CTP synthase of Buchnera aphidicola subsp. Schizaphis graminum (strain Sg).